The primary structure comprises 407 residues: Enolase-binding protein (407 aa).

A signal peptide spans 1 to 24; the sequence is MALGNALYPLTATVFLCVVGFATS. Residues 25–366 lie on the Extracellular side of the membrane; the sequence is SNENSRFLIN…FGQAYPGFRN (342 aa). N-linked (GlcNAc...) asparagine glycosylation is found at asparagine 52, asparagine 78, asparagine 161, and asparagine 250. Residues 367-387 traverse the membrane as a helical segment; it reads VAIGAAILFFSVLGVAIIDMI. The Cytoplasmic segment spans residues 388-407; the sequence is RRTIANRRAKRLHLGKYSRT.

In terms of assembly, (Microbial infection) Interacts with ENO/enolase from parasites P.berghei and P.falciparum. In terms of tissue distribution, expressed in the female midgut epithelium.

It is found in the cell membrane. (Microbial infection) Acts as a receptor for ENO/enolase from parasites P.berghei and P.falciparum. The interaction is involved in the invasion of the mosquito midgut by P.berghei ookinete, but is dispensable for P.falciparum ookinete invasion. The sequence is that of Enolase-binding protein from Anopheles gambiae (African malaria mosquito).